A 227-amino-acid chain; its full sequence is GRF-interacting factor 1 (227 aa).

Residues 186-227 (RSGSGAKEGSTSLSVDVRGGTSSGAQSGDGEYLKVGTEEEGS) form a disordered region.

It belongs to the SS18 family. Interacts with several GRFs. Interacts with GRF10. Interacts with GRF1. Expressed in shoots, aerial roots, ears and tassels. Expressed in the shoot apical meristem (SAM), young leaf primordia, leaf margins, inflorescence meristem, floral meristem and spikelet meristem.

In terms of biological role, transcription coactivator that plays a role in the regulation of meristematic function in leaves, stems and inflorescences. Regulates shoot architecture and meristem determinacy. Binds to the inflorescence architecture gene UB3 (unbranched3). Regulates the expression of several genes involved in inflorescence architecture. Component of a network formed by the microRNA396 (miRNA396), the GRFs and their interacting factors (GIFs) acting in the regulation of meristem function, at least partially through the control of cell proliferation. Associates with the core SWI/SNF chromatin-remodeling complex and specific GRFs to tightly regulate the transition between cell division and cell expansion in growing leaves. This Zea mays (Maize) protein is GRF-interacting factor 1.